Here is a 126-residue protein sequence, read N- to C-terminus: Small ribosomal subunit protein uS13 (126 aa).

Positions 91-126 (HRAGLPVRGQRTRTNSRTRRSAKRTVAGKKKAPSKK) are disordered. Residues 100 to 126 (QRTRTNSRTRRSAKRTVAGKKKAPSKK) are compositionally biased toward basic residues.

The protein belongs to the universal ribosomal protein uS13 family. Part of the 30S ribosomal subunit. Forms a loose heterodimer with protein S19. Forms two bridges to the 50S subunit in the 70S ribosome.

Its function is as follows. Located at the top of the head of the 30S subunit, it contacts several helices of the 16S rRNA. In the 70S ribosome it contacts the 23S rRNA (bridge B1a) and protein L5 of the 50S subunit (bridge B1b), connecting the 2 subunits; these bridges are implicated in subunit movement. Contacts the tRNAs in the A and P-sites. The protein is Small ribosomal subunit protein uS13 of Acaryochloris marina (strain MBIC 11017).